Consider the following 1113-residue polypeptide: Protein KIBRA (1113 aa).

2 consecutive WW domains span residues 6–39 and 53–86; these read LPLP…DPRD and DELP…DPRV. Coiled coils occupy residues 107-193 and 293-431; these read LSAQ…RGFQ and NSNN…SSMQ. Residue serine 141 is modified to Phosphoserine. 2 disordered regions span residues 429-448 and 522-547; these read SMQS…SRGS and RSLS…SPPC. Polar residues predominate over residues 522–532; the sequence is RSLSGTPKSMT. A compositionally biased stretch (low complexity) spans 533–542; that stretch reads SLSPRSSLSS. Serine 535 bears the Phosphoserine mark. Serine 542 is modified (phosphoserine; by CDK1). The C2 domain maps to 658–781; sequence GATRIQIALK…RSGERSTRWY (124 aa). Residues 825–975 are disordered; sequence LEKRQEGRSS…RSVRMKRPSS (151 aa). Residues 839–1113 form an interaction with histone H3 region; the sequence is EDSWRYEETS…NIPALSADDV (275 aa). Residues 847 to 870 are compositionally biased toward acidic residues; that stretch reads TSENEAVAEEEEEEVEEEEGEEDV. Residue serine 899 is modified to Phosphoserine. The residue at position 912 (threonine 912) is a Phosphothreonine. Over residues 924-938 the composition is skewed to polar residues; it reads IIRSKTFSPGPQSQY. Phosphoserine is present on serine 927. Position 929 is a phosphothreonine (threonine 929). A Phosphoserine; by CDK1 modification is found at serine 931. Residue serine 947 is modified to Phosphoserine. Interaction with PRKCZ regions lie at residues 953 to 996 and 956 to 975; these read SKKP…LDLQ and PPFV…RPSS. Serine 975 and serine 978 each carry phosphoserine; by PKC/PRKCZ. Residues 1001–1032 adopt a coiled-coil conformation; that stretch reads WHSQLTQEISVLKELKEQLEQAKSHGEKELPQ. An ADDV motif motif is present at residues 1111–1113; sequence DDV.

The protein belongs to the WWC family. KIBRA subfamily. As to quaternary structure, homodimer. Forms heterodimers with WWC2 and WWC3. Interacts with DDN. Interacts with DYNLL1 and histone H3. The interaction with DYNLL1 is mandatory for the recruitment and transactivation functions of ESR1 or DYNLL1 to the target chromatin and the interaction with histone H3 ensures proper regulatory interaction of WWC1-DYNLL1-ESR1 complexes with target chromatin. Interacts (via WW domains) with DDR1 (via PPxY motif) in a collagen-regulated manner. Interacts with PRKCZ (via the protein kinase domain). Forms a tripartite complex with DDR1 and PRKCZ, but predominantly in the absence of collagen. Interacts (via the ADDV motif) with PATJ (via PDZ domain 8). Interacts (via WW domains) with SYNPO (via PPxY motifs). Interacts with NF2 and SNX4. Interacts with DLC1 and PRKCZ. Interacts (via WW domains) with LATS1 and LATS2. Phosphorylation at Ser-542 and Ser-931 by CDK1 in response to spindle damage stress regulates mitotic exit, these two sites are dephosphorylated by CDC14B. Expressed in mammary epithelial cells and breast cancer cell lines. Found in the luminal epithelium surrounding the ducts in the normal breast. In the brain, expressed in somatodendritic compartment of neurons in the cortex and hippocampus and in the cerebellum it is found in the Purkinje cells and some granule cells (at protein level). Detected in brain, heart, colon and kidney. In the kidney, expressed in glomerular podocytes, in some tubules and in the collecting duct.

The protein resides in the cytoplasm. The protein localises to the perinuclear region. It is found in the nucleus. It localises to the cell projection. Its subcellular location is the ruffle membrane. The protein resides in the cytosol. In terms of biological role, regulator of the Hippo signaling pathway, also known as the Salvador-Warts-Hippo (SWH) pathway. Enhances phosphorylation of LATS1 and YAP1 and negatively regulates cell proliferation and organ growth due to a suppression of the transcriptional activity of YAP1, the major effector of the Hippo pathway. Along with NF2 can synergistically induce the phosphorylation of LATS1 and LATS2 and function in the regulation of Hippo signaling pathway. Acts as a transcriptional coactivator of ESR1 which plays an essential role in DYNLL1-mediated ESR1 transactivation. Regulates collagen-stimulated activation of the ERK/MAPK cascade. Modulates directional migration of podocytes. Plays a role in cognition and memory performance. Plays an important role in regulating AMPA-selective glutamate receptors (AMPARs) trafficking underlying synaptic plasticity and learning. In Homo sapiens (Human), this protein is Protein KIBRA.